The primary structure comprises 1036 residues: Cellulose synthase-like protein D1 (1036 aa).

Residues 1 to 99 form a disordered region; that stretch reads MASSPPKKTL…GGGDGPKMGN (99 aa). 2 stretches are compositionally biased toward polar residues: residues 9–19 and 69–80; these read TLNSQSSSLSR and NQPAGSSGSTSE. The segment covering 86–95 has biased composition (gly residues); that stretch reads NRGGGGGDGP. The next 2 membrane-spanning stretches (helical) occupy residues 178–198 and 208–228; these read ILSP…FFLW and AMWL…SWIL. Residue aspartate 308 is part of the active site. Positions 626-665 are disordered; sequence AMHVRTQSQASQTSQASDLESDTQPLNDDPDLGLPKKFGN. Low complexity predominate over residues 631–642; that stretch reads TQSQASQTSQAS. Aspartate 741 is a catalytic residue. 6 helical membrane passes run 817–837, 848–868, 895–915, 938–958, 962–982, and 1002–1022; these read IYPF…LCLF, IHFL…SLLE, LAAV…SFTL, GLFI…VIGA, IYSV…SLWV, and TIVY…WITI.

Belongs to the glycosyltransferase 2 family. Plant cellulose synthase-like D subfamily.

It localises to the golgi apparatus membrane. In terms of biological role, thought to be a Golgi-localized beta-glycan synthase that polymerize the backbones of noncellulosic polysaccharides (hemicelluloses) of plant cell wall. This chain is Cellulose synthase-like protein D1 (CSLD1), found in Arabidopsis thaliana (Mouse-ear cress).